Consider the following 287-residue polypeptide: Large ribosomal subunit protein uL2 (287 aa).

Disordered stretches follow at residues 25-57 and 203-287; these read TKTE…RGGG and LSAG…GRES. 2 stretches are compositionally biased toward basic residues: residues 209–220 and 259–287; these read GRNRWKGRRPKV and TRNR…GRES.

This sequence belongs to the universal ribosomal protein uL2 family. Part of the 50S ribosomal subunit. Forms a bridge to the 30S subunit in the 70S ribosome.

Functionally, one of the primary rRNA binding proteins. Required for association of the 30S and 50S subunits to form the 70S ribosome, for tRNA binding and peptide bond formation. It has been suggested to have peptidyltransferase activity; this is somewhat controversial. Makes several contacts with the 16S rRNA in the 70S ribosome. This is Large ribosomal subunit protein uL2 from Nostoc punctiforme (strain ATCC 29133 / PCC 73102).